We begin with the raw amino-acid sequence, 363 residues long: Chorismate synthase (363 aa).

Residues 36–58 (SESDIQGDLDRRRPGQSKITTPR) are disordered. Arg47 is a binding site for NADP(+). Residues 124-126 (RSS), Gly286, 301-305 (KPTAT), and Arg327 each bind FMN.

It belongs to the chorismate synthase family. As to quaternary structure, homotetramer. Requires FMNH2 as cofactor.

The enzyme catalyses 5-O-(1-carboxyvinyl)-3-phosphoshikimate = chorismate + phosphate. Its pathway is metabolic intermediate biosynthesis; chorismate biosynthesis; chorismate from D-erythrose 4-phosphate and phosphoenolpyruvate: step 7/7. Catalyzes the anti-1,4-elimination of the C-3 phosphate and the C-6 proR hydrogen from 5-enolpyruvylshikimate-3-phosphate (EPSP) to yield chorismate, which is the branch point compound that serves as the starting substrate for the three terminal pathways of aromatic amino acid biosynthesis. This reaction introduces a second double bond into the aromatic ring system. The polypeptide is Chorismate synthase (Crocosphaera subtropica (strain ATCC 51142 / BH68) (Cyanothece sp. (strain ATCC 51142))).